The primary structure comprises 194 residues: Phosphoheptose isomerase (194 aa).

The 158-residue stretch at 37–194 (IADTFKAGGK…LIEKEMVAQG (158 aa)) folds into the SIS domain. Residue 52–54 (NGG) coordinates substrate. Zn(2+)-binding residues include His-61 and Glu-65. Substrate contacts are provided by residues Glu-65, 93-94 (ND), 119-121 (STS), Ser-124, and Gln-172. 2 residues coordinate Zn(2+): Gln-172 and His-180.

The protein belongs to the SIS family. GmhA subfamily. In terms of assembly, homotetramer. The cofactor is Zn(2+).

It is found in the cytoplasm. It catalyses the reaction 2 D-sedoheptulose 7-phosphate = D-glycero-alpha-D-manno-heptose 7-phosphate + D-glycero-beta-D-manno-heptose 7-phosphate. The protein operates within carbohydrate biosynthesis; D-glycero-D-manno-heptose 7-phosphate biosynthesis; D-glycero-alpha-D-manno-heptose 7-phosphate and D-glycero-beta-D-manno-heptose 7-phosphate from sedoheptulose 7-phosphate: step 1/1. Functionally, catalyzes the isomerization of sedoheptulose 7-phosphate in D-glycero-D-manno-heptose 7-phosphate. This chain is Phosphoheptose isomerase, found in Sodalis glossinidius (strain morsitans).